The sequence spans 289 residues: Diaminopimelate epimerase (289 aa).

Residues Asn-13, Gln-47, and Asn-67 each coordinate substrate. Catalysis depends on Cys-76, which acts as the Proton donor. Substrate is bound by residues 77 to 78, Asn-167, Asn-200, and 218 to 219; these read GN and ER. The active-site Proton acceptor is Cys-227. 228–229 provides a ligand contact to substrate; sequence GT.

This sequence belongs to the diaminopimelate epimerase family. Homodimer.

It localises to the cytoplasm. It carries out the reaction (2S,6S)-2,6-diaminopimelate = meso-2,6-diaminopimelate. It participates in amino-acid biosynthesis; L-lysine biosynthesis via DAP pathway; DL-2,6-diaminopimelate from LL-2,6-diaminopimelate: step 1/1. Functionally, catalyzes the stereoinversion of LL-2,6-diaminopimelate (L,L-DAP) to meso-diaminopimelate (meso-DAP), a precursor of L-lysine and an essential component of the bacterial peptidoglycan. In Burkholderia pseudomallei (strain 668), this protein is Diaminopimelate epimerase.